We begin with the raw amino-acid sequence, 447 residues long: Clusterin (447 aa).

Positions 1–22 are cleaved as a signal peptide; that stretch reads MKTLLLCVGLLLSWERGQVLGD. The short motif at 77 to 80 is the Nuclear localization signal element; that stretch reads KKNK. Residues asparagine 85 and asparagine 102 are each glycosylated (N-linked (GlcNAc...) asparagine). 5 cysteine pairs are disulfide-bonded: cysteine 101/cysteine 311, cysteine 112/cysteine 303, cysteine 115/cysteine 300, cysteine 120/cysteine 293, and cysteine 128/cysteine 283. Phosphoserine is present on serine 132. Residues asparagine 144, asparagine 289, asparagine 326, asparagine 352, and asparagine 372 are each glycosylated (N-linked (GlcNAc...) asparagine). A Phosphoserine modification is found at serine 394. The short motif at 441-445 is the Nuclear localization signal element; sequence RKKKR.

This sequence belongs to the clusterin family. In terms of assembly, antiparallel disulfide-linked heterodimer of an alpha chain and a beta chain. Self-associates and forms higher oligomers. Interacts with a broad range of misfolded proteins, including APP, APOC2 and LYZ. Slightly acidic pH promotes interaction with misfolded proteins. Forms high-molecular weight oligomers upon interaction with misfolded proteins. Interacts with APOA1, LRP2, CLUAP1 and PON1. Interacts with the complement membrane attack complex. Interacts (via alpha chain) with XRCC6. Interacts with SYVN1, COMMD1, BTRC, CUL1 and with ubiquitin and SCF (SKP1-CUL1-F-box protein) E3 ubiquitin-protein ligase complexes. Interacts (via alpha chain) with BAX in stressed cells, where BAX undergoes a conformation change leading to association with the mitochondrial membrane. Does not interact with BAX in unstressed cells. Found in a complex with LTF, CLU, EPPIN and SEMG1. Interacts (immaturely glycosylated pre-secreted form) with HSPA5; this interaction promotes CLU stability and facilitates stress-induced CLU retrotranslocation from the secretory pathway to the mitochondria, thereby reducing stress-induced apoptosis by stabilizing mitochondrial membrane integrity. Interacts with BCL2L1; this interaction releases and activates BAX and promotes cell death. Interacts with TGFBR2 and ACVR1. Interacts (secreted form) with STMN3; this interaction may act as an important modulator during neuronal differentiation. Interacts with VLDLR and LRP8. Proteolytically cleaved on its way through the secretory system, probably within the Golgi lumen. Proteolytic cleavage is not necessary for its chaperone activity. All non-secreted forms are not proteolytically cleaved. Chaperone activity of uncleaved forms is dependent on a non-reducing environment. Post-translationally, polyubiquitinated, leading to proteasomal degradation. Under cellular stress, the intracellular level of cleaved form is reduced due to proteasomal degradation. In terms of processing, heavily N-glycosylated. About 30% of the protein mass is comprised of complex N-linked carbohydrate. Endoplasmic reticulum (ER) stress induces changes in glycosylation status and increases level of hypoglycosylated forms. Core carbohydrates are essential for chaperone activity. Non-secreted forms are hypoglycosylated or unglycosylated.

It is found in the secreted. The protein localises to the nucleus. The protein resides in the cytoplasm. Its subcellular location is the mitochondrion membrane. It localises to the cytosol. It is found in the microsome. The protein localises to the endoplasmic reticulum. The protein resides in the mitochondrion. Its subcellular location is the perinuclear region. It localises to the cytoplasmic vesicle. It is found in the secretory vesicle. The protein localises to the chromaffin granule. In terms of biological role, functions as extracellular chaperone that prevents aggregation of non native proteins. Prevents stress-induced aggregation of blood plasma proteins. Inhibits formation of amyloid fibrils by APP, APOC2, B2M, CALCA, CSN3, SNCA and aggregation-prone LYZ variants (in vitro). Does not require ATP. Maintains partially unfolded proteins in a state appropriate for subsequent refolding by other chaperones, such as HSPA8/HSC70. Does not refold proteins by itself. Binding to cell surface receptors triggers internalization of the chaperone-client complex and subsequent lysosomal or proteasomal degradation. When secreted, protects cells against apoptosis and against cytolysis by complement: inhibits assembly of the complement membrane attack complex (MAC) by preventing polymerization of C9 pore component of the MAC complex. Intracellular forms interact with ubiquitin and SCF (SKP1-CUL1-F-box protein) E3 ubiquitin-protein ligase complexes and promote the ubiquitination and subsequent proteasomal degradation of target proteins. Promotes proteasomal degradation of COMMD1 and IKBKB. Modulates NF-kappa-B transcriptional activity. Following stress, promotes apoptosis. Inhibits apoptosis when associated with the mitochondrial membrane by interference with BAX-dependent release of cytochrome c into the cytoplasm. Plays a role in the regulation of cell proliferation. An intracellular form suppresses stress-induced apoptosis by stabilizing mitochondrial membrane integrity through interaction with HSPA5. Secreted form does not affect caspase or BAX-mediated intrinsic apoptosis and TNF-induced NF-kappa-B-activity. Secreted form act as an important modulator during neuronal differentiation through interaction with STMN3. Plays a role in the clearance of immune complexes that arise during cell injury. This chain is Clusterin (CLU), found in Oryctolagus cuniculus (Rabbit).